Here is a 348-residue protein sequence, read N- to C-terminus: ECA polysaccharide chain length modulation protein (348 aa).

The next 2 helical transmembrane spans lie at 31 to 51 and 323 to 343; these read FWIIGIGLLFALIALAYTFFA and AFLMIMWGIVGALIGAGVALT.

Belongs to the WzzB/Cld/Rol family. Probably part of a complex composed of WzxE, WzyE and WzzE.

Its subcellular location is the cell inner membrane. The protein operates within bacterial outer membrane biogenesis; enterobacterial common antigen biosynthesis. Functionally, modulates the polysaccharide chain length of enterobacterial common antigen (ECA). This is ECA polysaccharide chain length modulation protein from Salmonella typhimurium (strain LT2 / SGSC1412 / ATCC 700720).